Consider the following 221-residue polypeptide: Peroxiredoxin 2 (221 aa).

A Thioredoxin domain is found at 15 to 170 (PQIGAPAPDF…IIRIIDALQT (156 aa)). Cys-56 (cysteine sulfenic acid (-SOH) intermediate) is an active-site residue. Substrate is bound at residue Arg-133. Cysteines 211 and 217 form a disulfide.

It belongs to the peroxiredoxin family. Prx6 subfamily. Homodecamer. Pentamer of dimers that assemble into a ring structure.

The protein resides in the cytoplasm. It carries out the reaction a hydroperoxide + [thioredoxin]-dithiol = an alcohol + [thioredoxin]-disulfide + H2O. Functionally, thiol-specific peroxidase that catalyzes the reduction of hydrogen peroxide and organic hydroperoxides to water and alcohols, respectively. Plays a role in cell protection against oxidative stress by detoxifying peroxides. This chain is Peroxiredoxin 2, found in Caldanaerobacter subterraneus subsp. tengcongensis (strain DSM 15242 / JCM 11007 / NBRC 100824 / MB4) (Thermoanaerobacter tengcongensis).